We begin with the raw amino-acid sequence, 487 residues long: N-succinylglutamate 5-semialdehyde dehydrogenase (487 aa).

The disordered stretch occupies residues M1–A23. Residue G220–G225 participates in NAD(+) binding. Residues E243 and C277 contribute to the active site.

Belongs to the aldehyde dehydrogenase family. AstD subfamily.

It catalyses the reaction N-succinyl-L-glutamate 5-semialdehyde + NAD(+) + H2O = N-succinyl-L-glutamate + NADH + 2 H(+). Its pathway is amino-acid degradation; L-arginine degradation via AST pathway; L-glutamate and succinate from L-arginine: step 4/5. Catalyzes the NAD-dependent reduction of succinylglutamate semialdehyde into succinylglutamate. The chain is N-succinylglutamate 5-semialdehyde dehydrogenase from Shewanella sp. (strain ANA-3).